Consider the following 578-residue polypeptide: E3 ubiquitin-protein ligase Praja-1 (578 aa).

A disordered region spans residues 1–298; the sequence is MSHQERIASQ…KVPRRRRTMA (298 aa). 2 stretches are compositionally biased toward basic and acidic residues: residues 57 to 67 and 107 to 116; these read DYSRYPPREYR and KFKDDPEKGA. Over residues 151–163 the composition is skewed to polar residues; sequence SKQNGSSASQISS. At threonine 231 the chain carries Phosphothreonine. Basic and acidic residues-rich tracts occupy residues 243–264 and 273–290; these read RWRDAADAEEAHAEGLARRGRG and RYAEDQDARSEQAKADKV. Serine 317 and serine 319 each carry phosphoserine. The interval 332 to 397 is disordered; sequence RSREQPQSSS…QASLEEGEIP (66 aa). Low complexity predominate over residues 359–373; that stretch reads AGAGSLASAGSNGSG. The segment covering 377–395 has biased composition (acidic residues); the sequence is EVQDPSLQEEEQASLEEGE. The segment at 530 to 571 adopts an RING-type zinc-finger fold; that stretch reads CPICCSEYVKGEVATELPCHHYFHKPCVSIWLQKSGTCPVCR.

As to quaternary structure, binds ubiquitin-conjugating enzymes (E2s). Binds, in vitro and in vivo, the MAGE conserved domain of MAGED1. Binds weakly Necdin, in vitro. Interacts with UBE2D2. Substrate for E2-dependent ubiquitination. In terms of tissue distribution, expressed in brain, liver, kidney. Highest levels in brain where it is found in many regions including cortical and subcortical areas and in neurons of the amygdala. Weak expression also found in testis. Also expressed in developing embryo.

The enzyme catalyses S-ubiquitinyl-[E2 ubiquitin-conjugating enzyme]-L-cysteine + [acceptor protein]-L-lysine = [E2 ubiquitin-conjugating enzyme]-L-cysteine + N(6)-ubiquitinyl-[acceptor protein]-L-lysine.. Has E2-dependent E3 ubiquitin-protein ligase activity. Ubiquitinates MAGED1 antigen leading to its subsequent degradation by proteasome. May be involved in protein sorting. This Mus musculus (Mouse) protein is E3 ubiquitin-protein ligase Praja-1 (Pja1).